Reading from the N-terminus, the 447-residue chain is Folate synthesis bifunctional protein (447 aa).

Residues 1 to 165 are HPPK; that stretch reads MTTAQFICLS…SFGEIAHLLP (165 aa). One can recognise a Pterin-binding domain in the interval 179 to 438; the sequence is TLLMGVVNVT…DVEANQRVLS (260 aa). The tract at residues 181–447 is DHPS; sequence LMGVVNVTDN…SAAAWSGVHV (267 aa). Residue asparagine 186 coordinates Mg(2+). Residues threonine 226, aspartate 266, asparagine 286, aspartate 356, lysine 392, and 426–428 contribute to the (7,8-dihydropterin-6-yl)methyl diphosphate site; that span reads RVH.

It in the C-terminal section; belongs to the DHPS family. In the N-terminal section; belongs to the HPPK family. Mg(2+) is required as a cofactor.

It carries out the reaction 6-hydroxymethyl-7,8-dihydropterin + ATP = (7,8-dihydropterin-6-yl)methyl diphosphate + AMP + H(+). The catalysed reaction is (7,8-dihydropterin-6-yl)methyl diphosphate + 4-aminobenzoate = 7,8-dihydropteroate + diphosphate. Its pathway is cofactor biosynthesis; tetrahydrofolate biosynthesis; 2-amino-4-hydroxy-6-hydroxymethyl-7,8-dihydropteridine diphosphate from 7,8-dihydroneopterin triphosphate: step 4/4. It participates in cofactor biosynthesis; tetrahydrofolate biosynthesis; 7,8-dihydrofolate from 2-amino-4-hydroxy-6-hydroxymethyl-7,8-dihydropteridine diphosphate and 4-aminobenzoate: step 1/2. This is Folate synthesis bifunctional protein (folKP) from Chlamydia caviae (strain ATCC VR-813 / DSM 19441 / 03DC25 / GPIC) (Chlamydophila caviae).